Reading from the N-terminus, the 544-residue chain is Chaperonin GroEL 2 (544 aa).

ATP is bound by residues 29–32 (TLGP), 86–90 (DGTTT), Gly413, 479–481 (NAA), and Asp495.

Belongs to the chaperonin (HSP60) family. Forms a cylinder of 14 subunits composed of two heptameric rings stacked back-to-back. Interacts with the co-chaperonin GroES.

The protein resides in the cytoplasm. It carries out the reaction ATP + H2O + a folded polypeptide = ADP + phosphate + an unfolded polypeptide.. Together with its co-chaperonin GroES, plays an essential role in assisting protein folding. The GroEL-GroES system forms a nano-cage that allows encapsulation of the non-native substrate proteins and provides a physical environment optimized to promote and accelerate protein folding. The chain is Chaperonin GroEL 2 from Synechococcus sp. (strain CC9605).